The chain runs to 311 residues: CD-NTase-associated protein 12 (311 aa).

Residues 4–121 (RIFIGSSKEG…LLGITVPQFE (118 aa)) form the TIR domain. Positions 157 to 311 (STVLAIGYFY…RNIVKIIQEE (155 aa)) are STING domain. 3',3'-c-di-GMP-binding residues include Phe168, Pro232, and Asp249.

The protein in the C-terminal section; belongs to the bacterial STING family. Forms homodimers; in the presence of c-di-GMP forms filaments with an ordered array of parallel-stacked subunits.

The catalysed reaction is NAD(+) + H2O = ADP-D-ribose + nicotinamide + H(+). NAD(+) hydrolase activity is strongly stimulated by c-di-GMP, weakly by 3'3'-cGAMP, very weakly by c-di-AMP but not at all by 2'3'-cGAMP. Self-association of TIR domains is required for NADase activity. In terms of biological role, effector protein of a CBASS antiviral system with NAD(+) hydrolase activity. CBASS (cyclic oligonucleotide-based antiphage signaling system) provides immunity against bacteriophage. The CD-NTase protein synthesizes cyclic nucleotides in response to infection; these serve as specific second messenger signals. The signals activate a diverse range of effectors, leading to bacterial cell death and thus abortive phage infection. A type I-D CBASS(GG) system. Binds c-di-GMP, does not bind cUMP-AMP. Upon activation by c-di-GMP forms filaments which hydrolyze NAD(+); filament formation is required for enzyme activation. In Flavobacterium daejeonense, this protein is CD-NTase-associated protein 12.